We begin with the raw amino-acid sequence, 363 residues long: Large ribosomal subunit protein uL4A (363 aa).

Phosphoserine is present on S87. Residues 280 to 363 form a C-terminal-extended nuclear localization signal region; sequence PENIISNADV…EKFLTVLHEN (84 aa).

This sequence belongs to the universal ribosomal protein uL4 family. As to quaternary structure, component of the large ribosomal subunit (LSU). Mature yeast ribosomes consist of a small (40S) and a large (60S) subunit. The 40S small subunit contains 1 molecule of ribosomal RNA (18S rRNA) and at least 33 different proteins. The large 60S subunit contains 3 rRNA molecules (25S, 5.8S and 5S rRNA) and at least 46 different proteins. uL4 is associated with the polypeptide exit tunnel. uL4 interacts with its chaperone ACL4 and the nuclear import receptor KAP104.

The protein resides in the cytoplasm. The protein localises to the nucleus. Its function is as follows. Component of the ribosome, a large ribonucleoprotein complex responsible for the synthesis of proteins in the cell. The small ribosomal subunit (SSU) binds messenger RNAs (mRNAs) and translates the encoded message by selecting cognate aminoacyl-transfer RNA (tRNA) molecules. The large subunit (LSU) contains the ribosomal catalytic site termed the peptidyl transferase center (PTC), which catalyzes the formation of peptide bonds, thereby polymerizing the amino acids delivered by tRNAs into a polypeptide chain. The nascent polypeptides leave the ribosome through a tunnel in the LSU and interact with protein factors that function in enzymatic processing, targeting, and the membrane insertion of nascent chains at the exit of the ribosomal tunnel. uL4 participates in the regulation of the accumulation of its own mRNA. The protein is Large ribosomal subunit protein uL4A (rpl402) of Schizosaccharomyces pombe (strain 972 / ATCC 24843) (Fission yeast).